We begin with the raw amino-acid sequence, 374 residues long: MATETFLFTSESVNEGHPDKLCDQISDAVLDACLEQDPESKVACETCTKTNMVMVFGEITTKANVDYEKIVRDTCRNIGFVSDDVGLDADNCKVLVNIEQQSPDIAQGVHGHLTKRPEDIGAGDQGHMFGYATDETPEFMPLSHVLATKLGASLTEVRKNGTCPWLRPDGKTQVTVEYYNDKGAMVPIRVHTVLISTQHDETVTNDEIAADLKEHVIKPVIPEKYLDEKTIFHLNPSGRFRHGGPHGDAGLTGRKIIIDTYGGWGAHGGGAFSGKDPTKVDRSGAYIVREAAKSIVANGLARRCLVQVSYAIGVPEPLSVFVDSYGTGKIPDREILNIVKEAFDFRPGMISISLDLLRGGNGRFFEDSCIWTFW.

Glu11 lines the Mg(2+) pocket. His17 lines the ATP pocket. Residue Glu45 participates in K(+) binding. Positions 58 and 101 each coordinate L-methionine. Residues 169-171, 237-240, Asp248, 254-255, Ala271, Lys275, and Lys279 contribute to the ATP site; these read DGK, SGRF, and RK. Residue Asp248 coordinates L-methionine. Lys279 lines the L-methionine pocket.

This sequence belongs to the AdoMet synthase family. As to quaternary structure, homotetramer. The cofactor is Mn(2+). It depends on Mg(2+) as a cofactor. Co(2+) is required as a cofactor. K(+) serves as cofactor. In terms of tissue distribution, expressed in vegetative and reproductive tissues.

Its subcellular location is the cytoplasm. It catalyses the reaction L-methionine + ATP + H2O = S-adenosyl-L-methionine + phosphate + diphosphate. Its pathway is amino-acid biosynthesis; S-adenosyl-L-methionine biosynthesis; S-adenosyl-L-methionine from L-methionine: step 1/1. Its function is as follows. Catalyzes the formation of S-adenosylmethionine from methionine and ATP. The reaction comprises two steps that are both catalyzed by the same enzyme: formation of S-adenosylmethionine (AdoMet) and triphosphate, and subsequent hydrolysis of the triphosphate. The sequence is that of S-adenosylmethionine synthase 2 (SAMS2) from Pisum sativum (Garden pea).